Here is a 522-residue protein sequence, read N- to C-terminus: Acetylcholine receptor subunit delta (522 aa).

Positions 1-21 (MGNIHFVYLLISCLYYSGCSG) are cleaved as a signal peptide. At 22–245 (VNEEERLIND…VTFYLIIRRK (224 aa)) the chain is on the extracellular side. N-linked (GlcNAc...) asparagine glycosylation is found at Asn-91, Asn-164, and Asn-229. Cysteines 151 and 165 form a disulfide. The next 3 membrane-spanning stretches (helical) occupy residues 246 to 270 (PLFYVINFITPCVLISFLASLAFYL), 278 to 295 (MSTAISVLLAQAVFLLLT), and 312 to 333 (YLMFIMSLVTGVIVNCGIVLNF). Over 334–476 (HFRTPSTHVL…WNLVGQTIDR (143 aa)) the chain is Cytoplasmic. Phosphotyrosine; by Tyr-kinases is present on Tyr-393. A helical transmembrane segment spans residues 477–497 (LSMFIITPVMVLGTIFIFVMG).

This sequence belongs to the ligand-gated ion channel (TC 1.A.9) family. Acetylcholine receptor (TC 1.A.9.1) subfamily. Pentamer of two alpha chains, and one each of the beta, delta, and gamma chains.

The protein resides in the postsynaptic cell membrane. It is found in the cell membrane. The catalysed reaction is K(+)(in) = K(+)(out). It catalyses the reaction Na(+)(in) = Na(+)(out). In terms of biological role, after binding acetylcholine, the AChR responds by an extensive change in conformation that affects all subunits and leads to opening of an ion-conducting channel across the plasma membrane. This Tetronarce californica (Pacific electric ray) protein is Acetylcholine receptor subunit delta (chrnd).